The sequence spans 45 residues: uncharacterized protein (45 aa).

This is an uncharacterized protein from Archaeoglobus fulgidus (strain ATCC 49558 / DSM 4304 / JCM 9628 / NBRC 100126 / VC-16).